A 238-amino-acid polypeptide reads, in one-letter code: Ribonuclease PH (238 aa).

Residues 64 to 86 (GMLPRSTGSRMDREAARGKQSGR) form a disordered region. Residues Arg-86 and 124-126 (GTR) each bind phosphate.

Belongs to the RNase PH family. Homohexameric ring arranged as a trimer of dimers.

It carries out the reaction tRNA(n+1) + phosphate = tRNA(n) + a ribonucleoside 5'-diphosphate. Functionally, phosphorolytic 3'-5' exoribonuclease that plays an important role in tRNA 3'-end maturation. Removes nucleotide residues following the 3'-CCA terminus of tRNAs; can also add nucleotides to the ends of RNA molecules by using nucleoside diphosphates as substrates, but this may not be physiologically important. Probably plays a role in initiation of 16S rRNA degradation (leading to ribosome degradation) during starvation. This is Ribonuclease PH from Methylobacillus flagellatus (strain ATCC 51484 / DSM 6875 / VKM B-1610 / KT).